We begin with the raw amino-acid sequence, 362 residues long: Holliday junction branch migration complex subunit RuvB (362 aa).

The tract at residues 1-183 (MADSSLVGGG…FGFTGHLEFY (183 aa)) is large ATPase domain (RuvB-L). ATP contacts are provided by residues Leu22, Arg23, Gly64, Lys67, Thr68, Thr69, 130-132 (EDF), Arg173, Tyr183, and Arg220. A Mg(2+)-binding site is contributed by Thr68. Positions 184-254 (SVEELELVLR…TASAALDMYE (71 aa)) are small ATPAse domain (RuvB-S). Residues 257-362 (KRGLDRLDRS…PVAEWLPNGQ (106 aa)) are head domain (RuvB-H). DNA contacts are provided by Arg312 and Arg317.

The protein belongs to the RuvB family. Homohexamer. Forms an RuvA(8)-RuvB(12)-Holliday junction (HJ) complex. HJ DNA is sandwiched between 2 RuvA tetramers; dsDNA enters through RuvA and exits via RuvB. An RuvB hexamer assembles on each DNA strand where it exits the tetramer. Each RuvB hexamer is contacted by two RuvA subunits (via domain III) on 2 adjacent RuvB subunits; this complex drives branch migration. In the full resolvosome a probable DNA-RuvA(4)-RuvB(12)-RuvC(2) complex forms which resolves the HJ.

The protein localises to the cytoplasm. The enzyme catalyses ATP + H2O = ADP + phosphate + H(+). Its function is as follows. The RuvA-RuvB-RuvC complex processes Holliday junction (HJ) DNA during genetic recombination and DNA repair, while the RuvA-RuvB complex plays an important role in the rescue of blocked DNA replication forks via replication fork reversal (RFR). RuvA specifically binds to HJ cruciform DNA, conferring on it an open structure. The RuvB hexamer acts as an ATP-dependent pump, pulling dsDNA into and through the RuvAB complex. RuvB forms 2 homohexamers on either side of HJ DNA bound by 1 or 2 RuvA tetramers; 4 subunits per hexamer contact DNA at a time. Coordinated motions by a converter formed by DNA-disengaged RuvB subunits stimulates ATP hydrolysis and nucleotide exchange. Immobilization of the converter enables RuvB to convert the ATP-contained energy into a lever motion, pulling 2 nucleotides of DNA out of the RuvA tetramer per ATP hydrolyzed, thus driving DNA branch migration. The RuvB motors rotate together with the DNA substrate, which together with the progressing nucleotide cycle form the mechanistic basis for DNA recombination by continuous HJ branch migration. Branch migration allows RuvC to scan DNA until it finds its consensus sequence, where it cleaves and resolves cruciform DNA. In Arthrobacter sp. (strain FB24), this protein is Holliday junction branch migration complex subunit RuvB.